The chain runs to 100 residues: Urease subunit gamma (100 aa).

Belongs to the urease gamma subunit family. In terms of assembly, heterotrimer of UreA (gamma), UreB (beta) and UreC (alpha) subunits. Three heterotrimers associate to form the active enzyme.

The protein resides in the cytoplasm. It catalyses the reaction urea + 2 H2O + H(+) = hydrogencarbonate + 2 NH4(+). It participates in nitrogen metabolism; urea degradation; CO(2) and NH(3) from urea (urease route): step 1/1. The protein is Urease subunit gamma of Leptothrix cholodnii (strain ATCC 51168 / LMG 8142 / SP-6) (Leptothrix discophora (strain SP-6)).